The chain runs to 525 residues: uncharacterized protein (525 aa).

A run of 2 helical transmembrane segments spans residues A36 to L56 and A61 to I81. One can recognise a PAC domain in the interval S173–A228. The Histidine kinase domain occupies A246 to A466. Position 249 is a phosphohistidine; by autocatalysis (H249). The disordered stretch occupies residues L506–A525.

The protein localises to the cell membrane. The catalysed reaction is ATP + protein L-histidine = ADP + protein N-phospho-L-histidine.. This is an uncharacterized protein from Rhizobium meliloti (strain 1021) (Ensifer meliloti).